The chain runs to 1004 residues: MAPARARLSPALWVVTAAAAATCVSAGRGEVNLLDTSTIHGDWGWLTYPAHGWDSINEVDESFRPIHTYQVCNVMSPNQNNWLRTNWVPRDGARRVYAEIKFTLRDCNSIPGVLGTCKETFNLHYLESDRDLGASTQESQFLKIDTIAADESFTGADLGVRRLKLNTEVRGVGPLSKRGFYLAFQDIGACLAILSLRIYYKKCPAMVRNLAAFSEAVTGADSSSLVEVRGQCVRHSEERDTPKMYCSAEGEWLVPIGKCVCSAGYEERRDACMACELGFYKSAPGDQLCARCPPHSHSATPAAQTCRCDLSYYRAALDPPSAACTRPPSAPVNLISSVNGTSVTLEWAPPLDPGGRSDITYNAVCRRCPWALSHCEACGSGTRFVPQQTSLAQASLLVANLLAHMNYSFWIEAVNGVSNLSPEPRSAAVVNITTNQAAPSQVVVIRQERAGQTSVSLLWQEPEQPNGIILEYEIKYYEKDKEMQSYSTLKAVTTRATVSGLKPGTRYVFQVRARTSAGCGRFSQAMEVETGKPRPRYDTRTIVWICLTLITGLVVLLLLLICKKRHCGYSKAFQDSDEEKMHYQNGQAPPPVFLPLNHPPGKFPETQFSAEPHTYEEPGRAGRSFTREIEASRIHIEKIIGSGESGEVCYGRLQVPGQRDVPVAIKALKAGYTERQRQDFLSEAAIMGQFDHPNIIRLEGVVTRGRLAMIVTEYMENGSLDAFLRTHDGQFTIVQLVGMLRGVGAGMRYLSDLGYIHRDLAARNVLVDGRLVCKVSDFGLSRALEDDPEAAYTTAGGKIPIRWTAPEAIAFRTFSSASDVWSFGVVMWEVLAYGERPYWNMTNQDVISSVEEGYRLPAPMGCPRALHQLMLDCWHKDRAQRPRFAHVVSVLDALVHSPESLRATATVSRCPPPAFARSCFDLRAGGSGNGDLTVGDWLDSIRMGRYRDHFAAGGYSSLGMVLRMNAQDVRALGITLMGHQKKILGSIQTMRAQLSSTQGPRRHL.

Positions Met1 to Ala26 are cleaved as a signal peptide. Over Gly27–Thr541 the chain is Extracellular. The Eph LBD domain maps to Glu30–Arg208. Fibronectin type-III domains lie at Pro327–Ala437 and Ala438–Pro533. Residues Asn339, Asn406, and Asn431 are each glycosylated (N-linked (GlcNAc...) asparagine). The helical transmembrane segment at Ile542–Cys562 threads the bilayer. Residues Lys563–Tyr569 are mediates interaction with ANKS1A and ANKS1B. Residues Lys563 to Leu1004 are Cytoplasmic-facing. A mediates interaction with PIK3CG and required for endocytosis region spans residues Ala588–Gly643. Tyr615 is subject to Phosphotyrosine; by autocatalysis. The Protein kinase domain occupies Ile634–Val895. ATP is bound by residues Ile640–Val648 and Lys666. The Proton acceptor role is filled by Asp759. Tyr838 is modified (phosphotyrosine; by autocatalysis). In terms of domain architecture, SAM spans Asn929–Gln993. Positions Arg1002–Leu1004 match the PDZ-binding motif.

This sequence belongs to the protein kinase superfamily. Tyr protein kinase family. Ephrin receptor subfamily. In terms of assembly, heterotetramer upon binding of the ligand. The heterotetramer is composed of an ephrin dimer and a receptor dimer. Oligomerization is probably required to induce biological responses. May also form heterodimers with other ephrin receptors. Interacts with FYN; possible downstream effector of EPHA8 in regulation of cell adhesion. Interacts with PIK3CG; regulates integrin-mediated cell adhesion to substrate. Interacts with TIAM1; regulates clathrin-mediated endocytosis of EPHA8. Interacts with ANKS1A and ANKS1B; EPHA8 kinase activity-independent but stimulated by EPHA8 ubiquitination. Phosphorylated. Phosphorylation is stimulated upon binding of its ligands including EFNA2, EFNA3 and EFNA5. Autophosphorylation on Tyr-615 is critical for association with FYN. Autophosphorylation on Tyr-838 modulates tyrosine kinase activity. In terms of processing, ubiquitinated. Ubiquitination by CBL regulates the receptor stability and activity through proteasomal degradation. ANKS1A prevents ubiquitination and degradation. Specifically expressed in the central nervous system.

It localises to the cell membrane. The protein localises to the cell projection. Its subcellular location is the early endosome membrane. The enzyme catalyses L-tyrosyl-[protein] + ATP = O-phospho-L-tyrosyl-[protein] + ADP + H(+). In terms of biological role, receptor tyrosine kinase which binds promiscuously GPI-anchored ephrin-A family ligands residing on adjacent cells, leading to contact-dependent bidirectional signaling into neighboring cells. The signaling pathway downstream of the receptor is referred to as forward signaling while the signaling pathway downstream of the ephrin ligand is referred to as reverse signaling. The GPI-anchored ephrin-A EFNA2, EFNA3, and EFNA5 are able to activate EPHA8 through phosphorylation. With EFNA5 may regulate integrin-mediated cell adhesion and migration on fibronectin substrate but also neurite outgrowth. During development of the nervous system also plays a role in axon guidance. Downstream effectors of the EPHA8 signaling pathway include FYN which promotes cell adhesion upon activation by EPHA8 and the MAP kinases in the stimulation of neurite outgrowth. The chain is Ephrin type-A receptor 8 (Epha8) from Mus musculus (Mouse).